Consider the following 97-residue polypeptide: AEVKLGSDDGGLVFSPSSFTVAAGEKITFKNNAGFPHNIVFDEDEVPAGVNAEKISQPEYLNGAGETYEVTLTEKGTYKFYCEPHAGAGMKGEVTVN.

The Plastocyanin-like domain maps to 1–97 (AEVKLGSDDG…AGMKGEVTVN (97 aa)). The Cu cation site is built by His37, Cys82, His85, and Met90.

It belongs to the plastocyanin family. Cu(2+) serves as cofactor.

The protein localises to the plastid. It localises to the chloroplast thylakoid membrane. Participates in electron transfer between P700 and the cytochrome b6-f complex in photosystem I. In Petroselinum crispum (Parsley), this protein is Plastocyanin A/B (PETE).